The primary structure comprises 400 residues: Leukosialin (400 aa).

An N-terminal signal peptide occupies residues 1–19; sequence MATLLLLLGVLVVSPDALG. Residues 20-253 lie on the Extracellular side of the membrane; that stretch reads STTAVQTPTS…PFRNPDENSR (234 aa). Thr-21, Thr-22, Thr-26, and Thr-28 each carry an O-linked (GalNAc...) threonine glycan. Composition is skewed to polar residues over residues 21–51 and 58–112; these read TTAV…SITS and TGDQ…TPHA. Residues 21 to 224 form a disordered region; it reads TTAVQTPTSG…SSGASGPQVS (204 aa). O-linked (GalNAc...) serine glycans are attached at residues Ser-29 and Ser-35. O-linked (GalNAc...) threonine glycosylation occurs at Thr-36. 3 O-linked (GalNAc...) serine glycosylation sites follow: Ser-37, Ser-41, and Ser-42. O-linked (GalNAc...) threonine glycans are attached at residues Thr-46 and Thr-47. O-linked (GalNAc...) serine glycosylation is present at Ser-48. Thr-50, Thr-58, and Thr-69 each carry an O-linked (GalNAc...) threonine glycan. 2 O-linked (GalNAc...) serine glycosylation sites follow: Ser-99 and Ser-103. Residues Thr-109 and Thr-113 are each glycosylated (O-linked (GalNAc...) threonine). Ser-114 carries O-linked (GalNAc...) serine glycosylation. Composition is skewed to polar residues over residues 121 to 164 and 172 to 182; these read TANS…SRGT and ATVSLETSKGT. 4 O-linked (GalNAc...) threonine glycosylation sites follow: Thr-136, Thr-137, Thr-173, and Thr-178. Over residues 196 to 211 the composition is skewed to low complexity; the sequence is TSTGTTGPPVTMTTGS. Residues 212-224 are compositionally biased toward polar residues; that stretch reads LEPSSGASGPQVS. An N-linked (GlcNAc...) asparagine glycan is attached at Asn-239. Residues 254–276 traverse the membrane as a helical segment; it reads GMLPVAVLVALLAVIVLVALLLL. The Cytoplasmic portion of the chain corresponds to 277 to 400; that stretch reads WRRRQKRRTG…EPEGGDGAAP (124 aa). The interval 278 to 308 is required for interaction with EZR, MSN and RDX and for co-localization to microvilli; that stretch reads RRRQKRRTGALVLSRGGKRNGVVDAWAGPAQ. A Nuclear localization signal motif is present at residues 282 to 296; sequence KRRTGALVLSRGGKR. Ser-291 carries the phosphoserine modification. A compositionally biased stretch (gly residues) spans 320–332; it reads GGSGGDKGSGFPD. The segment at 320-400 is disordered; that stretch reads GGSGGDKGSG…EPEGGDGAAP (81 aa). Ser-336 is subject to Phosphoserine. Residue Thr-341 is modified to Phosphothreonine. Ser-351 is subject to Phosphoserine. At Ser-355 the chain carries Phosphoserine; by PKC/PRKCQ. Ser-368 and Ser-379 each carry phosphoserine.

In terms of assembly, interacts with SIGLEC1. As to quaternary structure, monomer. Interacts with CTNNB1. Interacts with RDX (via FERM domain), EZR and MSN. Post-translationally, glycosylated; has a high content of sialic acid and O-linked carbohydrate structures. Phosphorylation at Ser-355 is regulated by chemokines, requires its association with ERM proteins (EZR, RDX and MSN) and is essential for its function in the regulation of T-cell trafficking to lymph nodes. In terms of processing, has a high content of sialic acid and O-linked carbohydrate structures. Post-translationally, cleavage by CTSG releases its extracellular domain and triggers its intramembrane proteolysis by gamma-secretase releasing the CD43 cytoplasmic tail chain (CD43-ct) which translocates to the nucleus. Sumoylated. In terms of tissue distribution, cell surface of thymocytes, T-lymphocytes, neutrophils, plasma cells and myelomas.

The protein resides in the membrane. It is found in the cell projection. It localises to the microvillus. Its subcellular location is the uropodium. The protein localises to the nucleus. The protein resides in the PML body. In terms of biological role, predominant cell surface sialoprotein of leukocytes which regulates multiple T-cell functions, including T-cell activation, proliferation, differentiation, trafficking and migration. Positively regulates T-cell trafficking to lymph-nodes via its association with ERM proteins (EZR, RDX and MSN). Negatively regulates Th2 cell differentiation and predisposes the differentiation of T-cells towards a Th1 lineage commitment. Promotes the expression of IFN-gamma by T-cells during T-cell receptor (TCR) activation of naive cells and induces the expression of IFN-gamma by CD4(+) T-cells and to a lesser extent by CD8(+) T-cells. Plays a role in preparing T-cells for cytokine sensing and differentiation into effector cells by inducing the expression of cytokine receptors IFNGR and IL4R, promoting IFNGR and IL4R signaling and by mediating the clustering of IFNGR with TCR. Acts as a major E-selectin ligand responsible for Th17 cell rolling on activated vasculature and recruitment during inflammation. Mediates Th17 cells, but not Th1 cells, adhesion to E-selectin. Acts as a T-cell counter-receptor for SIGLEC1. Its function is as follows. Protects cells from apoptotic signals, promoting cell survival. The sequence is that of Leukosialin (SPN) from Homo sapiens (Human).